A 111-amino-acid chain; its full sequence is Large ribosomal subunit protein P1 (111 aa).

The interval proline 84–aspartate 111 is disordered.

It belongs to the eukaryotic ribosomal protein P1/P2 family. As to quaternary structure, P1 and P2 exist as dimers at the large ribosomal subunit. In terms of processing, phosphorylated.

Plays an important role in the elongation step of protein synthesis. The protein is Large ribosomal subunit protein P1 of Aspergillus fumigatus (strain ATCC MYA-4609 / CBS 101355 / FGSC A1100 / Af293) (Neosartorya fumigata).